The following is a 145-amino-acid chain: D-aminoacyl-tRNA deacylase (145 aa).

The Gly-cisPro motif, important for rejection of L-amino acids motif lies at 137-138 (GP).

This sequence belongs to the DTD family. As to quaternary structure, homodimer.

Its subcellular location is the cytoplasm. It carries out the reaction glycyl-tRNA(Ala) + H2O = tRNA(Ala) + glycine + H(+). The enzyme catalyses a D-aminoacyl-tRNA + H2O = a tRNA + a D-alpha-amino acid + H(+). In terms of biological role, an aminoacyl-tRNA editing enzyme that deacylates mischarged D-aminoacyl-tRNAs. Also deacylates mischarged glycyl-tRNA(Ala), protecting cells against glycine mischarging by AlaRS. Acts via tRNA-based rather than protein-based catalysis; rejects L-amino acids rather than detecting D-amino acids in the active site. By recycling D-aminoacyl-tRNA to D-amino acids and free tRNA molecules, this enzyme counteracts the toxicity associated with the formation of D-aminoacyl-tRNA entities in vivo and helps enforce protein L-homochirality. This Pseudomonas fluorescens (strain SBW25) protein is D-aminoacyl-tRNA deacylase.